Reading from the N-terminus, the 172-residue chain is Translationally-controlled tumor protein homolog (172 aa).

One can recognise a TCTP domain in the interval 1 to 172 (MIIYKDCITE…FKDGLIIEKC (172 aa)).

It belongs to the TCTP family.

The protein resides in the cytoplasm. Functionally, involved in calcium binding and microtubule stabilization. This is Translationally-controlled tumor protein homolog (tpt1) from Xenopus laevis (African clawed frog).